Consider the following 307-residue polypeptide: Aspartate carbamoyltransferase catalytic subunit (307 aa).

Carbamoyl phosphate-binding residues include Arg54 and Thr55. Position 83 (Lys83) interacts with L-aspartate. The carbamoyl phosphate site is built by Arg104, His132, and Gln135. The L-aspartate site is built by Arg165 and Arg228. Residues Leu267 and Pro268 each coordinate carbamoyl phosphate.

This sequence belongs to the aspartate/ornithine carbamoyltransferase superfamily. ATCase family. In terms of assembly, heterododecamer (2C3:3R2) of six catalytic PyrB chains organized as two trimers (C3), and six regulatory PyrI chains organized as three dimers (R2).

It catalyses the reaction carbamoyl phosphate + L-aspartate = N-carbamoyl-L-aspartate + phosphate + H(+). It functions in the pathway pyrimidine metabolism; UMP biosynthesis via de novo pathway; (S)-dihydroorotate from bicarbonate: step 2/3. Its function is as follows. Catalyzes the condensation of carbamoyl phosphate and aspartate to form carbamoyl aspartate and inorganic phosphate, the committed step in the de novo pyrimidine nucleotide biosynthesis pathway. This Clostridium botulinum (strain Alaska E43 / Type E3) protein is Aspartate carbamoyltransferase catalytic subunit.